We begin with the raw amino-acid sequence, 273 residues long: MSDMHSLLIAAILGVVEGLTEFLPVSSTGHMIIVGHLLGFEGDTAKTFEVVIQLGSILAVVVMFWRRLFGLIGIHFGRPLQHEGESKGRLTLIHILLGMIPAVVLGLLFHDTIKSLFNPINVMYALVVGGLLLIAAECLKPKEPRAPGLDDMTYRQAFMIGCFQCLALWPGFSRSGATISGGMLMGVSRYAASEFSFLLAVPMMMGATALDLYKSWGFLTTGDISMFAVGFITAFVVALIAIKTFLQLIKRISFIPFAIYRFIVAAAVYVVFF.

The next 7 helical transmembrane spans lie at 6–26 (SLLI…LPVS), 45–65 (AKTF…VMFW), 90–110 (LTLI…LLFH), 116–136 (LFNP…LIAA), 190–210 (YAAS…ATAL), 222–242 (GDIS…LIAI), and 252–272 (ISFI…YVVF).

This sequence belongs to the UppP family.

It is found in the cell inner membrane. It catalyses the reaction di-trans,octa-cis-undecaprenyl diphosphate + H2O = di-trans,octa-cis-undecaprenyl phosphate + phosphate + H(+). In terms of biological role, catalyzes the dephosphorylation of undecaprenyl diphosphate (UPP). Confers resistance to bacitracin. This Shigella sonnei (strain Ss046) protein is Undecaprenyl-diphosphatase.